We begin with the raw amino-acid sequence, 119 residues long: DNA-binding protein Maeo_0998 (119 aa).

Residues 1–11 (MDIEEIKRQKM) show a composition bias toward basic and acidic residues. Residues 1 to 36 (MDIEEIKRQKMMELQQQQAQGAPNPEEIQQQQEQER) are disordered. Positions 15–32 (QQQQAQGAPNPEEIQQQQ) are enriched in low complexity.

Belongs to the PDCD5 family.

The sequence is that of DNA-binding protein Maeo_0998 from Methanococcus aeolicus (strain ATCC BAA-1280 / DSM 17508 / OCM 812 / Nankai-3).